The chain runs to 167 residues: 3-dehydroquinate dehydratase (167 aa).

Tyr22 acts as the Proton acceptor in catalysis. Asn76, His82, and Asp89 together coordinate substrate. His102 functions as the Proton donor in the catalytic mechanism. Residues 103–104 (LT) and Arg113 contribute to the substrate site.

It belongs to the type-II 3-dehydroquinase family. In terms of assembly, homododecamer.

The catalysed reaction is 3-dehydroquinate = 3-dehydroshikimate + H2O. Its pathway is metabolic intermediate biosynthesis; chorismate biosynthesis; chorismate from D-erythrose 4-phosphate and phosphoenolpyruvate: step 3/7. Functionally, catalyzes a trans-dehydration via an enolate intermediate. The polypeptide is 3-dehydroquinate dehydratase (Helicobacter pylori (strain Shi470)).